The chain runs to 492 residues: Linolenate hydroperoxide lyase, chloroplastic (492 aa).

A disordered region spans residues 1 to 33 (MLLRTMAATSPRPPPSTSLTSQQPPSPPSQLPL). Residues 1-34 (MLLRTMAATSPRPPPSTSLTSQQPPSPPSQLPLR) constitute a chloroplast transit peptide. Position 454 (Cys-454) interacts with heme.

This sequence belongs to the cytochrome P450 family. The cofactor is heme. In terms of tissue distribution, expressed in roots, leaves, flowers and siliques.

The protein resides in the plastid. Its subcellular location is the chloroplast. In terms of biological role, catalyzes the conversion of (9Z,11E,15Z)-(13S)-hydroperoxyoctadeca-9,11,15-trienoate to (9Z)-12-oxo-dodec-9-enoate and cis-3-hexenal. Possesses low activity toward (9Z,11E)-(13S)-13-hydroperoxyoctadeca-9,11-dienoate. Required for the synthesis of the green leaf volatiles (GLVs) hexanal and trans-2-hexenal. This chain is Linolenate hydroperoxide lyase, chloroplastic, found in Arabidopsis thaliana (Mouse-ear cress).